The primary structure comprises 152 residues: MQARRKTRLYIVLAVLAGLGLTVSLTLYALSSNIDLFYTPGEIIYGKTETRALPHTGQRLRVGGYVQPGSLQRDPQTLDVRFKLYDARGVVDVSYKGILPDLFREGQGVVAQGVLDGERHITAQQVLAKHDENYTPPEVKNAMTPEKTGAQP.

Topologically, residues 1–8 (MQARRKTR) are cytoplasmic. Residues 9–29 (LYIVLAVLAGLGLTVSLTLYA) form a helical; Signal-anchor for type II membrane protein membrane-spanning segment. Topologically, residues 30-152 (LSSNIDLFYT…MTPEKTGAQP (123 aa)) are periplasmic. The heme site is built by His130 and Tyr134. The tract at residues 133–152 (NYTPPEVKNAMTPEKTGAQP) is disordered.

This sequence belongs to the CcmE/CycJ family.

Its subcellular location is the cell inner membrane. Its function is as follows. Heme chaperone required for the biogenesis of c-type cytochromes. Transiently binds heme delivered by CcmC and transfers the heme to apo-cytochromes in a process facilitated by CcmF and CcmH. This chain is Cytochrome c-type biogenesis protein CcmE, found in Klebsiella pneumoniae (strain 342).